Consider the following 697-residue polypeptide: Phosphoribosylformylglycinamidine synthase subunit PurL (697 aa).

Residue His34 is part of the active site. Residues Tyr37 and Lys76 each coordinate ATP. Glu78 contacts Mg(2+). Substrate-binding positions include 79–82 (SHNH) and Arg101. Catalysis depends on His80, which acts as the Proton acceptor. Residue Asp102 coordinates Mg(2+). Gln224 provides a ligand contact to substrate. A Mg(2+)-binding site is contributed by Asp250. 294–296 (ETQ) lines the substrate pocket. Asp472 and Gly509 together coordinate ATP. Residue Ser512 participates in substrate binding.

This sequence belongs to the FGAMS family. As to quaternary structure, monomer. Part of the FGAM synthase complex composed of 1 PurL, 1 PurQ and 2 PurS subunits.

Its subcellular location is the cytoplasm. It catalyses the reaction N(2)-formyl-N(1)-(5-phospho-beta-D-ribosyl)glycinamide + L-glutamine + ATP + H2O = 2-formamido-N(1)-(5-O-phospho-beta-D-ribosyl)acetamidine + L-glutamate + ADP + phosphate + H(+). It functions in the pathway purine metabolism; IMP biosynthesis via de novo pathway; 5-amino-1-(5-phospho-D-ribosyl)imidazole from N(2)-formyl-N(1)-(5-phospho-D-ribosyl)glycinamide: step 1/2. Functionally, part of the phosphoribosylformylglycinamidine synthase complex involved in the purines biosynthetic pathway. Catalyzes the ATP-dependent conversion of formylglycinamide ribonucleotide (FGAR) and glutamine to yield formylglycinamidine ribonucleotide (FGAM) and glutamate. The FGAM synthase complex is composed of three subunits. PurQ produces an ammonia molecule by converting glutamine to glutamate. PurL transfers the ammonia molecule to FGAR to form FGAM in an ATP-dependent manner. PurS interacts with PurQ and PurL and is thought to assist in the transfer of the ammonia molecule from PurQ to PurL. This is Phosphoribosylformylglycinamidine synthase subunit PurL from Pyrobaculum aerophilum (strain ATCC 51768 / DSM 7523 / JCM 9630 / CIP 104966 / NBRC 100827 / IM2).